A 100-amino-acid polypeptide reads, in one-letter code: Defensin-6 (100 aa).

The signal sequence occupies residues 1-19 (MRTLTILTAVLLVALQAKA). Residues 20 to 68 (EPLQAEDEPLQAKAYEADAQEQRGANDQDFAVSFAEDASSSLRALGSTR) constitute a propeptide that is removed on maturation. Intrachain disulfides connect C72–C99, C74–C88, and C78–C98.

It belongs to the alpha-defensin family. Homodimer. Self-assembles into higher-order oligomers termed nanonets, fibril-like structures that entrap microbes. Self-assembly into nanonets seems to protect against proteolytic digestion in duodenal fluid. Interacts with Y.enterocolitica invasin and S.typhimurium fliC/flagellim; the interaction creates an anchoring site for progressive DEFA6 self-assembly into nanonets. In terms of processing, proteolytically cleaved by trypsin at Arg-68; the propeptide is stored in the tissue of the small intestine and the mature peptide is found in the luminal fluid; cleavage may occur during or after release into the lumen. The N-terminal propeptide region suppresses self-assembly and renders DEFA6 propeptide unable to agglutinate bacteria and protect human epithelial cells from bacterial invasion. Under reducing conditions, naturally present in the gut owing to the low redox potential or enzymatically generated by the thioredoxin system, the disulfide bridges are opened leading to a conformational change of DEF6, thereby changing its antimicrobial spectrum. The reduced form exhibits inhibitory activity against anaerobic bacteria, in contrast to the minimal antimicrobial activity of the disulfide-linked oxidized form. The formation of higher-order nanonets and bacterial entrapment is independent of the redox state.

The protein resides in the secreted. It is found in the cytoplasmic vesicle. The protein localises to the secretory vesicle. In terms of biological role, host-defense peptide that contributes to intestinal innate immunity and mediates homeostasis at mucosal surfaces by forming higher-order oligomers that capture bacteria and prevent microbial invasion of the epithelium. After binding to bacterial surface proteins, undergoes ordered self-assembly to form fibril-like nanonets that surround and entangle bacteria and thereby prevent bacterial invasion across the epithelial barrier. Entangles and agglutinates Gram-negative bacteria, such as E.coli, S.typhimurium and Y.enterocolitica, and Gram-positive bacteria such as L.monocytogenes, thereby protecting the intestine against invasion by enteric bacterial pathogens. Blocks adhesion of C.albicans to intestinal epithelial cells and thereby suppresses fungal invasion of epithelial cells and biofilm formation. Under reducing conditions and in an acidic environment similar to the intestinal milieu, exhibits inhibitory activity against anaerobic bacteria such as B.adolescentis, L.acidophilus, and B.breve, as well as B.longum and S.thermophilus, possibly by leading to alterations in bacterial cell envelope structures. The disulfide-linked oxidized form exhibits negligible antimicrobial activity against Gram-negative and Gram-positive bacteria, as compared to the enteric defensin DEFA5. This Pan troglodytes (Chimpanzee) protein is Defensin-6 (DEFA6).